We begin with the raw amino-acid sequence, 359 residues long: Mitochondrial glutathione transporter SLC25A39 (359 aa).

Topologically, residues 1 to 14 (MADQDPGGISPLQQ) are mitochondrial intermembrane. Solcar repeat units lie at residues 9-151 (ISPL…LKAF), 159-243 (SDLY…VKSW), and 253-347 (TSVG…GKNF). Residues 15–35 (MVASGAGAVVTSLFMTPLDVV) traverse the membrane as a helical segment. The Mitochondrial matrix segment spans residues 36 to 121 (KVRLQSQRPS…VKIVRHEGTR (86 aa)). [2Fe-2S] cluster-binding residues include cysteine 74, cysteine 78, cysteine 88, and cysteine 94. A helical membrane pass occupies residues 122 to 142 (TLWSGLPATLVMTVPATAAYF). Residues 143-164 (TAYDQLKAFLCGRALTSDLYAP) lie on the Mitochondrial intermembrane side of the membrane. The chain crosses the membrane as a helical span at residues 165-185 (MVAGALARLGTVTVISPLELV). At 186 to 214 (RTKLQAQHLSYRELGTCVRAAVAQGGWRS) the chain is on the mitochondrial matrix side. A helical membrane pass occupies residues 215–235 (LWLGWGPTALRDVPFSALYWF). The Mitochondrial intermembrane portion of the chain corresponds to 236 to 255 (NYELVKSWLSGLRPKDQTSV). The chain crosses the membrane as a helical span at residues 256–276 (GISFVAGGISGMVAATLTLPF). Over 277–317 (DVVKTQRQVALGAVEALRVMPLNTDSTWLLLRRILAESGTR) the chain is Mitochondrial matrix. A helical membrane pass occupies residues 318 to 338 (GLFAGFLPRIIKAAPSCAIMI). Over 339–359 (STYEFGKNFFQRLNREQLLSP) the chain is Mitochondrial intermembrane.

Belongs to the mitochondrial carrier (TC 2.A.29) family. Post-translationally, cleaved and degraded by AFG3L2; degradation by AFG3L2 is regulated by the ability of SLC25A39 to bind iron-sulfur. In absence of mitochondrial glutathione, SLC25A39 binds iron-sulfur, preventing cleavage and degradation by AFG3L2. The presence of mitochondrial glutathione prevents iron-sulfur-binding to SLC25A39, promoting cleavage and degradation by AFG3L2.

Its subcellular location is the mitochondrion inner membrane. It carries out the reaction glutathione(in) = glutathione(out). With respect to regulation, the activity of SLC25A39 is regulated by levels of mitochondrial glutathione via its ability to bind [2Fe-2S] iron-sulfur cluster. Upon physiological levels of mitochondrial glutathione, glutathione prevents iron-sulfur-binding to SLC25A39 promoting cleavage and degradation by AFG3L2. Upon depletion of mitochondrial glutathione, SLC25A39 binds iron-sulfur, preventing cleavage and degradation by AFG3L2. Mitochondrial transporter required for glutathione import into mitochondria. Glutathione, which plays key roles in oxidative metabolism, is produced exclusively in the cytosol and is imported in many organelles. Mitochondrial glutathione is required for the activity and stability of proteins containing iron-sulfur clusters, as well as erythropoiesis. This is Mitochondrial glutathione transporter SLC25A39 (SLC25A39) from Bos taurus (Bovine).